The following is a 461-amino-acid chain: Photosystem II CP43 reaction center protein (461 aa).

Residues 1-2 (ME) constitute a propeptide that is removed on maturation. Threonine 3 is subject to N-acetylthreonine. Threonine 3 is modified (phosphothreonine). 5 helical membrane passes run 57–81 (LFEVAHFVPEKPMYEQGLILLPHLA), 122–143 (LIGPETLEESFPFFGYVWKDKS), 166–188 (KSVYFGGVYDTWAPGGGDVRKIT), 243–263 (KPFAWARRAFVWSGEAYLSYS), and 279–300 (WFNNTAYPSEFYGPTGPEASQA). Residue glutamate 355 coordinates [CaMn4O5] cluster. Residues 435–459 (RARAAAAGFEKGIDRDTEPVLSMTP) form a helical membrane-spanning segment.

This sequence belongs to the PsbB/PsbC family. PsbC subfamily. As to quaternary structure, PSII is composed of 1 copy each of membrane proteins PsbA, PsbB, PsbC, PsbD, PsbE, PsbF, PsbH, PsbI, PsbJ, PsbK, PsbL, PsbM, PsbT, PsbX, PsbY, PsbZ, Psb30/Ycf12, at least 3 peripheral proteins of the oxygen-evolving complex and a large number of cofactors. It forms dimeric complexes. It depends on Binds multiple chlorophylls and provides some of the ligands for the Ca-4Mn-5O cluster of the oxygen-evolving complex. It may also provide a ligand for a Cl- that is required for oxygen evolution. PSII binds additional chlorophylls, carotenoids and specific lipids. as a cofactor.

It localises to the plastid. The protein resides in the chloroplast thylakoid membrane. In terms of biological role, one of the components of the core complex of photosystem II (PSII). It binds chlorophyll and helps catalyze the primary light-induced photochemical processes of PSII. PSII is a light-driven water:plastoquinone oxidoreductase, using light energy to abstract electrons from H(2)O, generating O(2) and a proton gradient subsequently used for ATP formation. In Psilotum nudum (Whisk fern), this protein is Photosystem II CP43 reaction center protein.